The following is a 369-amino-acid chain: Dehydrogenase pigH (369 aa).

In terms of domain architecture, Enoyl reductase (ER) spans 13–367 (KAPLLEVKAA…QGVSAKKIVV (355 aa)). 44–49 (IDWLIQ) contributes to the NADP(+) binding site. 2 N-linked (GlcNAc...) asparagine glycosylation sites follow: asparagine 79 and asparagine 101. NADP(+)-binding positions include 197-200 (SRKN) and tyrosine 215. Residues 280 to 300 (TIIFFVSWIISFKFKGLLKGI) traverse the membrane as a helical segment. Residue 360 to 361 (VS) participates in NADP(+) binding.

The protein belongs to the zinc-containing alcohol dehydrogenase family.

It is found in the membrane. It functions in the pathway secondary metabolite biosynthesis. In terms of biological role, dehydrogenase; part of the gene cluster that mediates the biosynthesis of azaphilone pigments (MonAzPs), a complex mixture of compounds with a common azaphilone skeleton very widely used as food colorants. Within the pathway, pigH might be involved in the late steps of yellow pigments monascin and ankaflavin biosynthesis. The first step of the pathway is performed by the nrPKS pigA that forms the hexaketide precursor from successive condensations of five malonyl-CoA units, with a simple acetyl-CoA starter unit. The role of esterase pigG is not clear, but it may play at most a supplementary role in the formation of the benzaldehyde produced by the pigA nrPKS. This very reactive benzaldehyde is intercepted by the pigC ketoreductase that to provide the first stable enzyme-free MonAzPs intermediate, 6-(4-hydroxy-2-oxopentyl)-3-methyl-2,4-dioxocyclohexane carbaldehyde, also known as M7PKS-1. The FAD-dependent monooxygenase pigN hydroxylates M7PKS-1 at C-4, which triggers the formation of the pyran ring. PigJ, pigK and pigD are involved in the acetylation of the pyran ring. PigJ and pigK form the two subunits of a dedicated fungal FAS that produces the side chain fatty acyl moiety of MonAzPs and pigD transfers the fatty acyl chain to the C-4 alcohol. PigM and pigO are involved in the elimination of the omega-1 alcohol. PigM acts as an O-acetyltransferase that synthesizes the putative O-11 acetyl intermediate whereas pigO eliminates acetic acid to yield an intermediate with a C10(11) double bond. The dehydration of the C-11 alcohol followed by the reduction of the C6(7) double bond by the NAD(P)H-dependent oxidoreductase pigE increases the electrophilicity of the C-5 ketone of the resulting acyl benzopyran. This in turn sets up the C-5 ketone for an intramolecular Knoevenagel aldol condensation with the C-20 enol of the side chain. This condensation affords the characteristic linear tricyclic carbon skeletons of the yellow pigments that serve as the common precursors for the classical yellow pigments monascin and ankaflavin, orange pigments rubopunctatin and monascorubrin, and red pigments ribropunctamine and monascorubramine. The FAD-dependent oxidoreductase pigF is especially invoved in the biosynthesis of orange and red pigments via desaturation of C6(7). The polypeptide is Dehydrogenase pigH (Monascus ruber (Mold)).